The sequence spans 165 residues: Transcription factor TCP16 (165 aa).

Residues 1–11 show a composition bias toward polar residues; it reads MDSKNGINNSQ. Disordered stretches follow at residues 1 to 21 and 146 to 165; these read MDSK…KDRH and GNAT…TTTV. Residues 12 to 21 are compositionally biased toward basic residues; the sequence is KARRTPKDRH. Residues 17–71 form the TCP domain; that stretch reads PKDRHLKIGGRDRRIRIPPSVAPQLFRLTKELGFKTDGETVSWLLQNAEPAIFAA. Low complexity predominate over residues 148–165; it reads ATASDTTSAATTTATTTV.

In terms of tissue distribution, mostly in anther in young buds.

The protein localises to the nucleus. Required during early processes in pollen development. The protein is Transcription factor TCP16 (TCP16) of Arabidopsis thaliana (Mouse-ear cress).